The primary structure comprises 95 residues: Fluoride-specific ion channel FluC 1 (95 aa).

The next 3 membrane-spanning stretches (helical) occupy residues 23-43, 49-69, and 70-90; these read LIDA…LMGW, LWGT…LLMF, and DGAY…WLLG. Residues G56 and T59 each coordinate Na(+).

This sequence belongs to the fluoride channel Fluc/FEX (TC 1.A.43) family.

It is found in the cell membrane. It carries out the reaction fluoride(in) = fluoride(out). Na(+) is not transported, but it plays an essential structural role and its presence is essential for fluoride channel function. Its function is as follows. Fluoride-specific ion channel. Important for reducing fluoride concentration in the cell, thus reducing its toxicity. The sequence is that of Fluoride-specific ion channel FluC 1 from Corynebacterium diphtheriae (strain ATCC 700971 / NCTC 13129 / Biotype gravis).